The sequence spans 612 residues: Actin-binding LIM protein 2 (612 aa).

LIM zinc-binding domains lie at 22 to 81 (ILCN…LYGT), 81 to 141 (TRCF…TLVG), 151 to 210 (RSCG…KFGI), and 210 to 270 (IRCD…ARTE). Residues cysteine 83, cysteine 86, histidine 103, cysteine 106, cysteine 109, cysteine 112, cysteine 131, and cysteine 134 each coordinate Zn(2+). Zn(2+) contacts are provided by cysteine 212, cysteine 215, histidine 232, cysteine 235, cysteine 238, cysteine 241, histidine 260, and cysteine 263. The segment covering 269 to 278 (TEDKSKETRT) has biased composition (basic and acidic residues). Disordered regions lie at residues 269-295 (TEDK…SGSP) and 341-433 (AVGD…DNIY). Composition is skewed to low complexity over residues 279–295 (SSES…SGSP) and 364–373 (SSPSSAGSVS). Phosphoserine is present on residues serine 282, serine 294, serine 365, and serine 368. A compositionally biased stretch (polar residues) spans 394-416 (SGRSTPSLSVHSDSRPPSSTYQQ). Serine 453 carries the post-translational modification Phosphoserine. A disordered region spans residues 471 to 520 (ADTRTNSPDLDSQSLSLSSGADQEPLQRMPGDSLYSRFPYSKPDTLPGPR). Threonine 473 bears the Phosphothreonine mark. Phosphoserine is present on residues serine 477 and serine 579. Over residues 477-489 (SPDLDSQSLSLSS) the composition is skewed to low complexity. The HP domain maps to 544–612 (TREYKIYPYD…NDLKKKALLF (69 aa)).

As to quaternary structure, interacts with F-actin and ABRA.

The protein localises to the cytoplasm. Functionally, may act as scaffold protein. May stimulate ABRA activity and ABRA-dependent SRF transcriptional activity. In Rattus norvegicus (Rat), this protein is Actin-binding LIM protein 2 (Ablim2).